Here is a 176-residue protein sequence, read N- to C-terminus: Pectinesterase inhibitor 1 (176 aa).

The N-terminal stretch at 1-25 (MAANLRNNAFLSSLMFLLLIGSSYA) is a signal peptide. Intrachain disulfides connect cysteine 35/cysteine 44 and cysteine 98/cysteine 138. Residue asparagine 154 is glycosylated (N-linked (GlcNAc...) asparagine).

Belongs to the PMEI family. In terms of assembly, monomer and homodimer. Interacts in vitro with PPME1. As to expression, highest expression in flowers. Expressed exclusively at the pollen tube tip.

It is found in the secreted. The protein resides in the extracellular space. Its subcellular location is the apoplast. In terms of biological role, inhibits pectin methylesterase (PME) from flowers and siliques. Inhibits PME from leaves. The sequence is that of Pectinesterase inhibitor 1 from Arabidopsis thaliana (Mouse-ear cress).